A 340-amino-acid polypeptide reads, in one-letter code: Selenide, water dikinase (340 aa).

C13 is a catalytic residue. ATP is bound by residues K16 and 43 to 45 (ASD). D46 serves as a coordination point for Mg(2+). ATP-binding positions include D63, D86, and 133–135 (GHS). D86 is a Mg(2+) binding site. D221 contacts Mg(2+).

This sequence belongs to the selenophosphate synthase 1 family. Class I subfamily. Homodimer. It depends on Mg(2+) as a cofactor.

It carries out the reaction hydrogenselenide + ATP + H2O = selenophosphate + AMP + phosphate + 2 H(+). Functionally, synthesizes selenophosphate from selenide and ATP. The sequence is that of Selenide, water dikinase from Desulfitobacterium hafniense (strain DSM 10664 / DCB-2).